Here is a 386-residue protein sequence, read N- to C-terminus: L-lactate dehydrogenase (386 aa).

The FMN hydroxy acid dehydrogenase domain maps to 1-380; it reads MIISAASDYR…SGDALSRVTR (380 aa). A substrate-binding site is contributed by tyrosine 24. 2 residues coordinate FMN: serine 106 and glutamine 127. Position 129 (tyrosine 129) interacts with substrate. Threonine 155 serves as a coordination point for FMN. Arginine 164 contacts substrate. Lysine 251 lines the FMN pocket. Histidine 275 serves as the catalytic Proton acceptor. Arginine 278 contributes to the substrate binding site. 306–330 contacts FMN; that stretch reads DSGIRSGLDVVRMLALGADAVLLGR.

The protein belongs to the FMN-dependent alpha-hydroxy acid dehydrogenase family. It depends on FMN as a cofactor.

Its subcellular location is the cell inner membrane. The catalysed reaction is (S)-lactate + A = pyruvate + AH2. Catalyzes the conversion of L-lactate to pyruvate. Is coupled to the respiratory chain. The polypeptide is L-lactate dehydrogenase (Xanthomonas campestris pv. campestris (strain B100)).